We begin with the raw amino-acid sequence, 66 residues long: Large ribosomal subunit protein uL29 (66 aa).

Belongs to the universal ribosomal protein uL29 family.

The protein is Large ribosomal subunit protein uL29 of Pseudothermotoga lettingae (strain ATCC BAA-301 / DSM 14385 / NBRC 107922 / TMO) (Thermotoga lettingae).